Reading from the N-terminus, the 187-residue chain is MKKLALFALLMVPAILLASGHDSGEASRYLTQTGRESDFWPRVINFTIFAAILYYLIANPIKNFFKGRREGIAGQLKEIESKLQAAKDEKKEAQSHLNESVNKAAEIIEDAKKEAEILAAKIAEASENELVVLEKQFEEKITLEERKAARDVIDEVLSENITTDDIALDETKVVDIISRKAEHGKVA.

Residues 4–24 (LALFALLMVPAILLASGHDSG) traverse the membrane as a helical segment.

It belongs to the ATPase B chain family. In terms of assembly, F-type ATPases have 2 components, F(1) - the catalytic core - and F(0) - the membrane proton channel. F(1) has five subunits: alpha(3), beta(3), gamma(1), delta(1), epsilon(1). F(0) has three main subunits: a(1), b(2) and c(10-14). The alpha and beta chains form an alternating ring which encloses part of the gamma chain. F(1) is attached to F(0) by a central stalk formed by the gamma and epsilon chains, while a peripheral stalk is formed by the delta and b chains.

The protein resides in the cell inner membrane. In terms of biological role, f(1)F(0) ATP synthase produces ATP from ADP in the presence of a proton or sodium gradient. F-type ATPases consist of two structural domains, F(1) containing the extramembraneous catalytic core and F(0) containing the membrane proton channel, linked together by a central stalk and a peripheral stalk. During catalysis, ATP synthesis in the catalytic domain of F(1) is coupled via a rotary mechanism of the central stalk subunits to proton translocation. Functionally, component of the F(0) channel, it forms part of the peripheral stalk, linking F(1) to F(0). In Sulfurovum sp. (strain NBC37-1), this protein is ATP synthase subunit b.